We begin with the raw amino-acid sequence, 340 residues long: Deubiquitinase SseL (340 aa).

The active site involves histidine 223. Residue cysteine 285 is the Nucleophile of the active site.

This sequence belongs to the peptidase C79 family.

Its subcellular location is the secreted. It is found in the host cytoplasm. Functionally, effector proteins function to alter host cell physiology and promote bacterial survival in host tissues. This protease targets the host cell ubiquitin pathway by acting as a deubiquitinase in infected host cells. Specifically hydrolyzes mono- and polyubiquitin substrates in vitro with a preference for 'Lys-63'-linked ubiquitin chains, suggesting that it interferes with a signaling pathway rather than inhibiting proteasomal-dependent degradation of its targets. Does not possess desumoylating activity. Is required for the Salmonella-induced delayed cytotoxicity in macrophages and full virulence. Is not required for intracellular bacterial replication. The protein is Deubiquitinase SseL (sseL) of Salmonella typhimurium (strain LT2 / SGSC1412 / ATCC 700720).